The primary structure comprises 428 residues: uncharacterized protein (428 aa).

The next 12 membrane-spanning stretches (helical) occupy residues 14–34 (LYDW…FPLF), 55–75 (YTIA…GTIA), 84–104 (FFGF…FIPS), 107–127 (WLLL…ANVF), 149–169 (FGLG…VILL), 182–202 (ASQL…IPMI), 238–258 (LFLF…IITM), 272–292 (SLLI…IIYG), 302–322 (TMLY…YFME), 324–344 (TLDF…IQAL), 361–381 (FFGF…LLIA), and 392–412 (TAVF…AFVP).

It belongs to the major facilitator superfamily.

The protein localises to the cell membrane. This is an uncharacterized protein from Bacillus subtilis (strain 168).